The chain runs to 319 residues: Guanidinobutyrase (319 aa).

6 residues coordinate Mn(2+): histidine 129, aspartate 152, histidine 154, aspartate 156, aspartate 243, and aspartate 245.

This sequence belongs to the arginase family. Agmatinase subfamily. Homohexamer. Mn(2+) serves as cofactor.

The catalysed reaction is 4-guanidinobutanoate + H2O = urea + 4-aminobutanoate. Its function is as follows. Catalyzes specifically the hydrolysis of 4-guanidinobutanoate to 4-aminobutanoate and urea. Has no activity against arginine, agmatine, 3-guanidinopropionate and guanidinoacetate. The polypeptide is Guanidinobutyrase (gbuA) (Pseudomonas aeruginosa (strain ATCC 15692 / DSM 22644 / CIP 104116 / JCM 14847 / LMG 12228 / 1C / PRS 101 / PAO1)).